The chain runs to 431 residues: MFRSKRSGLVRRLWRSRVIPERDGGDGNGQSSERNATAVTAEGQRMAQPRRAQEGEGRPVRCCLFAERPGPELPPPPPPPPPGGASPPGPGGGEARSRLVLLERELKAVTYALLKRLKERSLHSLLQAVESRGGTPGGCVLVARGELRLGAARRPPPHLLLGKLFRWPDLQHPAELKALCECQSFGAADGPTVCCNPYHFSRLCGPESPPPPYSRLSPNDEQKPLDLSDSTLSYTETEATNSPNVTPGEFSDASTSPDAVKRSHWCNVAYWEHRTRVGRLYTVYEQSVSIFYDLPQGNGFCLGQLNLENRSETVRRTRSKIGYGILLSKEPDGVWAYNRSEHPIFVNSPTLDIPNCRTLIVRKVMPGYSIKVFDYEKSCLLQHTAELDYADGPYDPNSVRISFAKGWGPCYSRQFITSCPCWLEILLSNNR.

A compositionally biased stretch (basic residues) spans 1–15 (MFRSKRSGLVRRLWR). The interval 1–95 (MFRSKRSGLV…SPPGPGGGEA (95 aa)) is disordered. Residues 29–38 (GQSSERNATA) show a composition bias toward polar residues. Residues 71–90 (PELPPPPPPPPPGGASPPGP) are compositionally biased toward pro residues. The MH1 domain occupies 85–209 (ASPPGPGGGE…FSRLCGPESP (125 aa)). Residues Cys139, Cys182, Cys194, and His199 each coordinate Zn(2+). Residues 235–245 (TETEATNSPNV) are compositionally biased toward polar residues. Residues 235 to 258 (TETEATNSPNVTPGEFSDASTSPD) are disordered. One can recognise an MH2 domain in the interval 265 to 431 (WCNVAYWEHR…WLEILLSNNR (167 aa)).

This sequence belongs to the dwarfin/SMAD family. Developing heart, eyes and limbs.

It is found in the nucleus. Functionally, transforming growth factor-beta superfamily receptors signaling occurs through the Smad family of intracellular mediators. SMAD6 is an inhibitory Smad (i-Smad) that negatively regulates signaling downstream of type I transforming growth factor-beta. Acts as a mediator of TGF-beta and BMP anti-inflammatory activities. Suppresses IL1R-TLR signaling through its direct interaction with PEL1, preventing NF-kappa-B activation, nuclear transport and NF-kappa-B-mediated expression of pro-inflammatory genes. Blocks the BMP-SMAD1 signaling pathway by competing with SMAD4 for receptor-activated SMAD1-binding. Binds to regulatory elements in target promoter regions. This is Mothers against decapentaplegic homolog 6 (SMAD6) from Gallus gallus (Chicken).